A 351-amino-acid polypeptide reads, in one-letter code: MTKIKEIKKVLQQEDADAAWITTPLNIFYFTGYRSEPHERLFALLIPSNEEPVLFCPKMEVEEVKQSPFKGKIIGYLDTENPFDKYSKTFSKMLIESEHLTVKRQRELTKAFNIEHYQDVDQSIKDLRNIKSEDEIINIKKAAALADKCIEIGKSFLKEGVEEREVVNHIENEIKKYGVNEMSFDTMVLFGDHAASPHGTPGDRKLQQNEFVLFDLGVVYHHYCSDMTRTIHFGTPNKEAQNIYNIVLKAETEAIKSIKPGVTIKDIDKIARDIIEEAGYGDYFPHRLGHGLGLEEHEYQDISSVNNNQLEAGMVITIEPGIYVPHVAGVRIEDDILVTENGYEILTQYEK.

Residues Asp-215, Asp-226, His-290, Glu-319, and Glu-333 each contribute to the Mn(2+) site.

Belongs to the peptidase M24B family. Mn(2+) serves as cofactor.

This is an uncharacterized protein from Staphylococcus epidermidis (strain ATCC 35984 / DSM 28319 / BCRC 17069 / CCUG 31568 / BM 3577 / RP62A).